Reading from the N-terminus, the 421-residue chain is Chitin deacetylase (421 aa).

The first 21 residues, 1–21, serve as a signal peptide directing secretion; that stretch reads MQIKTFALSAAIAQVATLALA. Asn-39, Asn-70, Asn-87, and Asn-106 each carry an N-linked (GlcNAc...) asparagine glycan. Residues 157–349 enclose the NodB homology domain; sequence ETWGLTYDDG…YKQVIDVATC (193 aa). Asp-164 (proton acceptor) is an active-site residue. Asp-164 provides a ligand contact to acetate. Asp-165 serves as a coordination point for Co(2+). An N-linked (GlcNAc...) asparagine glycan is attached at Asn-168. Co(2+) is bound by residues His-214 and His-218. Tyr-255 provides a ligand contact to acetate. Asn-307 carries an N-linked (GlcNAc...) asparagine glycan. Catalysis depends on His-320, which acts as the Proton donor. N-linked (GlcNAc...) asparagine glycosylation is found at Asn-323, Asn-351, and Asn-367. Thr-390 is lipidated: GPI-anchor amidated threonine. Positions 391-421 are cleaved as a propeptide — removed in mature form; sequence AAAHIQASTSGAMSVLPNLALISAFIATLLF.

It belongs to the polysaccharide deacetylase family. Co(2+) is required as a cofactor.

The protein resides in the secreted. It is found in the cell wall. It localises to the cell membrane. The enzyme catalyses [(1-&gt;4)-N-acetyl-beta-D-glucosaminyl](n) + n H2O = chitosan + n acetate. Its function is as follows. Hydrolyzes the N-acetamido groups of N-acetyl-D-glucosamine residues in chitin to form chitosan and acetate. This is Chitin deacetylase from Amylomyces rouxii (Filamentous fungus).